The following is a 200-amino-acid chain: ATP-dependent Clp protease proteolytic subunit (200 aa).

Serine 98 serves as the catalytic Nucleophile. Histidine 123 is a catalytic residue.

The protein belongs to the peptidase S14 family. In terms of assembly, fourteen ClpP subunits assemble into 2 heptameric rings which stack back to back to give a disk-like structure with a central cavity, resembling the structure of eukaryotic proteasomes.

It localises to the cytoplasm. The enzyme catalyses Hydrolysis of proteins to small peptides in the presence of ATP and magnesium. alpha-casein is the usual test substrate. In the absence of ATP, only oligopeptides shorter than five residues are hydrolyzed (such as succinyl-Leu-Tyr-|-NHMec, and Leu-Tyr-Leu-|-Tyr-Trp, in which cleavage of the -Tyr-|-Leu- and -Tyr-|-Trp bonds also occurs).. Functionally, cleaves peptides in various proteins in a process that requires ATP hydrolysis. Has a chymotrypsin-like activity. Plays a major role in the degradation of misfolded proteins. The protein is ATP-dependent Clp protease proteolytic subunit of Ehrlichia canis (strain Jake).